The sequence spans 80 residues: Pigment-dispersing hormone type 2 (80 aa).

Positions 1–23 are cleaved as a signal peptide; it reads MARCFVVLAFLALAAMSLQVATA. At alanine 77 the chain carries Alanine amide.

Belongs to the arthropod PDH family. In terms of tissue distribution, eyestalk.

The protein resides in the secreted. In terms of biological role, the pigment-dispersing hormone causes the migration of the distal retinal pigment into the proximal end of the pigment chromatophore cells and thus decreases the amount of light entering the retinulas. May also function as a neurotransmitter and/or neuromodulator. The protein is Pigment-dispersing hormone type 2 (PDH2) of Penaeus vannamei (Whiteleg shrimp).